A 145-amino-acid chain; its full sequence is 3-hydroxyacyl-[acyl-carrier-protein] dehydratase FabZ (145 aa).

Residue histidine 49 is part of the active site.

This sequence belongs to the thioester dehydratase family. FabZ subfamily.

It is found in the cytoplasm. It catalyses the reaction a (3R)-hydroxyacyl-[ACP] = a (2E)-enoyl-[ACP] + H2O. Involved in unsaturated fatty acids biosynthesis. Catalyzes the dehydration of short chain beta-hydroxyacyl-ACPs and long chain saturated and unsaturated beta-hydroxyacyl-ACPs. The chain is 3-hydroxyacyl-[acyl-carrier-protein] dehydratase FabZ from Rickettsia peacockii (strain Rustic).